A 462-amino-acid chain; its full sequence is Cysteine--tRNA ligase (462 aa).

Cys-24 is a Zn(2+) binding site. Positions 26–36 (PTVYDDAHLGH) match the 'HIGH' region motif. Residues Cys-199, His-224, and Glu-228 each coordinate Zn(2+). A 'KMSKS' region motif is present at residues 256–260 (KMSKS). An ATP-binding site is contributed by Lys-259.

The protein belongs to the class-I aminoacyl-tRNA synthetase family. As to quaternary structure, monomer. Zn(2+) serves as cofactor.

Its subcellular location is the cytoplasm. It catalyses the reaction tRNA(Cys) + L-cysteine + ATP = L-cysteinyl-tRNA(Cys) + AMP + diphosphate. This Campylobacter jejuni subsp. doylei (strain ATCC BAA-1458 / RM4099 / 269.97) protein is Cysteine--tRNA ligase.